The following is a 223-amino-acid chain: MKRN2 opposite strand protein (223 aa).

The sequence is that of MKRN2 opposite strand protein (MKRN2OS) from Homo sapiens (Human).